The sequence spans 153 residues: Phosphatase NudJ (153 aa).

Residues 3 to 131 enclose the Nudix hydrolase domain; the sequence is KPHVTVACVV…LVAESIRCYQ (129 aa). Residues 36-57 carry the Nudix box motif; sequence GHLEADETLVEAAARELWEETG.

Belongs to the Nudix hydrolase family. NudJ subfamily. Monomer. Requires Mg(2+) as cofactor.

This Shigella boydii serotype 4 (strain Sb227) protein is Phosphatase NudJ (nudJ).